We begin with the raw amino-acid sequence, 572 residues long: AAA ATPase forming ring-shaped complexes (572 aa).

Residues 1–22 form a disordered region; sequence MTEPRHESGSAAPQRPATDPVQ. Positions 21–67 form a coiled coil; the sequence is VQRQVNLLRDQKRNLDKQAAALASQNEKLVRLLNASRQEIVGLKKTL. 270 to 275 is a binding site for ATP; sequence GNGKTL. Residues 527 to 539 show a composition bias toward acidic residues; it reads HEQQDLPDTEDSE. The segment at 527-572 is disordered; it reads HEQQDLPDTEDSEDWARLTGRRGDTIDSVHMASHRPQGEPGPGATP.

It belongs to the AAA ATPase family. As to quaternary structure, homohexamer. Assembles into a hexameric ring structure.

In Kocuria rhizophila (strain ATCC 9341 / DSM 348 / NBRC 103217 / DC2201), this protein is AAA ATPase forming ring-shaped complexes.